The following is a 234-amino-acid chain: Purine nucleoside phosphorylase DeoD-type (234 aa).

Position 4 (histidine 4) interacts with a purine D-ribonucleoside. Phosphate-binding positions include glycine 20, arginine 24, arginine 43, and 87–90 (RVGT). Residues glutamate 162, 178–180 (EME), and 202–203 (SD) contribute to the a purine D-ribonucleoside site. The active-site Proton donor is the aspartate 203.

This sequence belongs to the PNP/UDP phosphorylase family. Homohexamer; trimer of homodimers.

It catalyses the reaction a purine D-ribonucleoside + phosphate = a purine nucleobase + alpha-D-ribose 1-phosphate. The catalysed reaction is a purine 2'-deoxy-D-ribonucleoside + phosphate = a purine nucleobase + 2-deoxy-alpha-D-ribose 1-phosphate. Functionally, catalyzes the reversible phosphorolytic breakdown of the N-glycosidic bond in the beta-(deoxy)ribonucleoside molecules, with the formation of the corresponding free purine bases and pentose-1-phosphate. In terms of biological role, cleavage of adenosine and its derivatives. The protein is Purine nucleoside phosphorylase DeoD-type of Geobacillus stearothermophilus (Bacillus stearothermophilus).